The primary structure comprises 198 residues: V-type ATP synthase subunit E (198 aa).

This sequence belongs to the V-ATPase E subunit family.

Functionally, produces ATP from ADP in the presence of a proton gradient across the membrane. The polypeptide is V-type ATP synthase subunit E (Clostridium novyi (strain NT)).